The sequence spans 631 residues: Phosphomethylpyrimidine synthase (631 aa).

Substrate is bound by residues Asn-239, Met-268, Tyr-297, His-333, 353–355 (SRG), 394–397 (DGLR), and Glu-433. His-437 lines the Zn(2+) pocket. Tyr-460 provides a ligand contact to substrate. Zn(2+) is bound at residue His-501. Positions 581, 584, and 589 each coordinate [4Fe-4S] cluster.

This sequence belongs to the ThiC family. As to quaternary structure, homodimer. Requires [4Fe-4S] cluster as cofactor.

The enzyme catalyses 5-amino-1-(5-phospho-beta-D-ribosyl)imidazole + S-adenosyl-L-methionine = 4-amino-2-methyl-5-(phosphooxymethyl)pyrimidine + CO + 5'-deoxyadenosine + formate + L-methionine + 3 H(+). Its pathway is cofactor biosynthesis; thiamine diphosphate biosynthesis. Catalyzes the synthesis of the hydroxymethylpyrimidine phosphate (HMP-P) moiety of thiamine from aminoimidazole ribotide (AIR) in a radical S-adenosyl-L-methionine (SAM)-dependent reaction. The chain is Phosphomethylpyrimidine synthase from Shigella flexneri serotype 5b (strain 8401).